A 359-amino-acid polypeptide reads, in one-letter code: MRAAPMSLTILGIESSCDDTAAAILRGPGDDVAILSSVVSSQTDLHAAFGGVVPEIAARAHAETLDLVVEEAMATAGIALSDVDAIAVTAGPGLIGGVLSGVMAAKGLALGLGKPLIGVNHLAGHALTPRLTDGLAFPYLLLLVSGGHCQFLRVEGPERFVRLGGTIDDAPGEAFDKVARLLGLPQPGGPSVERAALAGDATRFKLPRPLLDRPGCDLSFSGLKTAVLRLRDGLVEANGGLTEQDRADICASFQAVVASVLAEKSRRALALGDVTAFAVAGGVAANQVLRAALEEVTDLPFAAPPLALCTDNAAIIAYAGLLAFEGGRVDDMTLSARPRWPLDATAAPMIGSGKKGAKA.

Residues His-121 and His-125 each coordinate Fe cation. Residues 143–147 (LVSGG), Asp-176, Gly-189, and Asn-286 contribute to the substrate site. Asp-311 contributes to the Fe cation binding site.

It belongs to the KAE1 / TsaD family. It depends on Fe(2+) as a cofactor.

It is found in the cytoplasm. It carries out the reaction L-threonylcarbamoyladenylate + adenosine(37) in tRNA = N(6)-L-threonylcarbamoyladenosine(37) in tRNA + AMP + H(+). Required for the formation of a threonylcarbamoyl group on adenosine at position 37 (t(6)A37) in tRNAs that read codons beginning with adenine. Is involved in the transfer of the threonylcarbamoyl moiety of threonylcarbamoyl-AMP (TC-AMP) to the N6 group of A37, together with TsaE and TsaB. TsaD likely plays a direct catalytic role in this reaction. The polypeptide is tRNA N6-adenosine threonylcarbamoyltransferase (Jannaschia sp. (strain CCS1)).